Here is a 365-residue protein sequence, read N- to C-terminus: Cobalt-precorrin-5B C(1)-methyltransferase (365 aa).

Belongs to the CbiD family.

It carries out the reaction Co-precorrin-5B + S-adenosyl-L-methionine = Co-precorrin-6A + S-adenosyl-L-homocysteine. The protein operates within cofactor biosynthesis; adenosylcobalamin biosynthesis; cob(II)yrinate a,c-diamide from sirohydrochlorin (anaerobic route): step 6/10. Its function is as follows. Catalyzes the methylation of C-1 in cobalt-precorrin-5B to form cobalt-precorrin-6A. This Clostridium perfringens (strain 13 / Type A) protein is Cobalt-precorrin-5B C(1)-methyltransferase.